Reading from the N-terminus, the 555-residue chain is Alpha-1,2-mannosyltransferase ALG9 (555 aa).

Over 1-7 (MNCKAVT) the chain is Cytoplasmic. The chain crosses the membrane as a helical span at residues 8-28 (ISLLLLLFLTRVYIQPTFSLI). Topologically, residues 29–62 (SDCDETFNYWEPLNLLVRGFGKQTWEYSPEYSIR) are lumenal. A helical transmembrane segment spans residues 63–83 (SWAFLLPFYCILYPVNKFTDL). Residues 84-86 (ESH) lie on the Cytoplasmic side of the membrane. Residues 87 to 107 (WNFFITRACLGFFSFIMEFKL) traverse the membrane as a helical segment. The Lumenal segment spans residues 108–113 (HREIAG). A helical transmembrane segment spans residues 114-134 (SLALQIANIWIIFQLFNPGWF). The Cytoplasmic segment spans residues 135 to 176 (HASVELLPSAVAMLLYVGATRHSLRYLSTGSTSNFTKSLAYN). Residues 177 to 197 (FLASILGWPFVLILSLPLCLH) form a helical membrane-spanning segment. Residues 198–213 (YLFNHRIISTIRTAFD) lie on the Lumenal side of the membrane. Residues 214 to 234 (CCLIFSLTAFAVIVTDSIFYG) traverse the membrane as a helical segment. Residues 235–268 (KLAPVSWNILFYNVINASEESGPNIFGVEPWYYY) are Cytoplasmic-facing. The helical transmembrane segment at 269 to 289 (PLNLLLNFPLPVLVLAILGIF) threads the bilayer. The Lumenal portion of the chain corresponds to 290 to 316 (HLRLWPLWASLFTWIAVFTQQPHKEER). A helical transmembrane segment spans residues 317–337 (FLYPIYGLITLSASIAFYKVL). At 338–349 (NLFNRKPILKKG) the chain is on the cytoplasmic side. A helical membrane pass occupies residues 350–370 (IKLSVLLIVAGQAMSRIVALV). Topologically, residues 371–555 (NNYTAPIAVY…LFEKPTETTN (185 aa)) are lumenal.

The protein belongs to the glycosyltransferase 22 family.

It localises to the endoplasmic reticulum membrane. The catalysed reaction is an alpha-D-Man-(1-&gt;2)-alpha-D-Man-(1-&gt;2)-alpha-D-Man-(1-&gt;3)-[alpha-D-Man-(1-&gt;3)-alpha-D-Man-(1-&gt;6)]-beta-D-Man-(1-&gt;4)-beta-D-GlcNAc-(1-&gt;4)-alpha-D-GlcNAc-diphospho-di-trans,poly-cis-dolichol + a di-trans,poly-cis-dolichyl beta-D-mannosyl phosphate = an alpha-D-Man-(1-&gt;2)-alpha-D-Man-(1-&gt;2)-alpha-D-Man-(1-&gt;3)-[alpha-D-Man-(1-&gt;2)-alpha-D-Man-(1-&gt;3)-alpha-D-Man-(1-&gt;6)]-beta-D-Man-(1-&gt;4)-beta-D-GlcNAc-(1-&gt;4)-alpha-D-GlcNAc-diphospho-di-trans,poly-cis-dolichol + a di-trans,poly-cis-dolichyl phosphate + H(+). The enzyme catalyses an alpha-D-Man-(1-&gt;2)-alpha-D-Man-(1-&gt;2)-alpha-D-Man-(1-&gt;3)-[alpha-D-Man-(1-&gt;2)-alpha-D-Man-(1-&gt;3)-[alpha-D-Man-(1-&gt;6)]-alpha-D-Man-(1-&gt;6)]-beta-D-Man-(1-&gt;4)-beta-D-GlcNAc-(1-&gt;4)-alpha-D-GlcNAc-diphospho-di-trans,poly-cis-dolichol + a di-trans,poly-cis-dolichyl beta-D-mannosyl phosphate = an alpha-D-Man-(1-&gt;2)-alpha-D-Man-(1-&gt;2)-alpha-D-Man-(1-&gt;3)-[alpha-D-Man-(1-&gt;2)-alpha-D-Man-(1-&gt;3)-[alpha-D-Man-(1-&gt;2)-alpha-D-Man-(1-&gt;6)]-alpha-D-Man-(1-&gt;6)]-beta-D-Man-(1-&gt;4)-beta-D-GlcNAc-(1-&gt;4)-alpha-D-GlcNAc-diphospho-di-trans,poly-cis-dolichol + a di-trans,poly-cis-dolichyl phosphate + H(+). Its pathway is protein modification; protein glycosylation. Mannosyltransferase that operates in the biosynthetic pathway of dolichol-linked oligosaccharides, the glycan precursors employed in protein asparagine (N)-glycosylation. The assembly of dolichol-linked oligosaccharides begins on the cytosolic side of the endoplasmic reticulum membrane and finishes in its lumen. The sequential addition of sugars to dolichol pyrophosphate produces dolichol-linked oligosaccharides containing fourteen sugars, including two GlcNAcs, nine mannoses and three glucoses. Once assembled, the oligosaccharide is transferred from the lipid to nascent proteins by oligosaccharyltransferases. In the lumen of the endoplasmic reticulum, catalyzes the addition of the seventh and ninth alpha-1,2-linked mannose residues to Man(6)GlcNAc(2)-PP-dolichol and Man(8)GlcNAc(2)-PP-dolichol respectively. The chain is Alpha-1,2-mannosyltransferase ALG9 (ALG9) from Saccharomyces cerevisiae (strain ATCC 204508 / S288c) (Baker's yeast).